A 426-amino-acid polypeptide reads, in one-letter code: Mediator of RNA polymerase II transcription subunit 1 (426 aa).

The disordered stretch occupies residues 319 to 349; it reads ISTSNSGSVQPKPRRKSSVLSNRRPSMTDSM. The segment covering 336–347 has biased composition (polar residues); sequence SVLSNRRPSMTD.

The protein belongs to the Mediator complex subunit 1 family. Component of the Mediator complex.

The protein localises to the nucleus. Its function is as follows. Component of the Mediator complex, a coactivator involved in the regulated transcription of nearly all RNA polymerase II-dependent genes. Mediator functions as a bridge to convey information from gene-specific regulatory proteins to the basal RNA polymerase II transcription machinery. Mediator is recruited to promoters by direct interactions with regulatory proteins and serves as a scaffold for the assembly of a functional preinitiation complex with RNA polymerase II and the general transcription factors. The chain is Mediator of RNA polymerase II transcription subunit 1 (MED1) from Kluyveromyces lactis (strain ATCC 8585 / CBS 2359 / DSM 70799 / NBRC 1267 / NRRL Y-1140 / WM37) (Yeast).